The following is a 307-amino-acid chain: MAGGFLSMANPAVTLSGVAGNIISFLVFLAPVATFLQVYKKKSTGGYSSVPYVVALFSSVLWIFYALVKTNSRPLLTINAFGCGVEAAYIVLYLVYAPRRARLRTLAFFLLLDVAAFALIVVTTLYLVPKPHQVKFLGSVCLAFSMAVFVAPLSIIFKVIKTKSVEFMPIGLSVCLTLSAVAWFCYGLFTKDPYVMYPNVGGFFFSCVQMGLYFWYRKPRNTAVLPTTSDSMSPISAAAAATQRVIELPAGTHAFTILSVSPIPILGVHKVEVVAAEQAADGVAAAAAADKELLQNKPEVIEITAAV.

The Extracellular portion of the chain corresponds to 1–14 (MAGGFLSMANPAVT). Residues 15 to 35 (LSGVAGNIISFLVFLAPVATF) traverse the membrane as a helical segment. The 84-residue stretch at 17–100 (GVAGNIISFL…VLYLVYAPRR (84 aa)) folds into the MtN3/slv 1 domain. At 36–47 (LQVYKKKSTGGY) the chain is on the cytoplasmic side. The chain crosses the membrane as a helical span at residues 48–68 (SSVPYVVALFSSVLWIFYALV). The Extracellular segment spans residues 69-74 (KTNSRP). The helical transmembrane segment at 75 to 95 (LLTINAFGCGVEAAYIVLYLV) threads the bilayer. At 96-107 (YAPRRARLRTLA) the chain is on the cytoplasmic side. A helical transmembrane segment spans residues 108-128 (FFLLLDVAAFALIVVTTLYLV). Topologically, residues 129–135 (PKPHQVK) are extracellular. A helical transmembrane segment spans residues 136–156 (FLGSVCLAFSMAVFVAPLSII). A MtN3/slv 2 domain is found at 136–219 (FLGSVCLAFS…MGLYFWYRKP (84 aa)). The Cytoplasmic portion of the chain corresponds to 157-168 (FKVIKTKSVEFM). Residues 169-189 (PIGLSVCLTLSAVAWFCYGLF) traverse the membrane as a helical segment. At 190–194 (TKDPY) the chain is on the extracellular side. The helical transmembrane segment at 195-215 (VMYPNVGGFFFSCVQMGLYFW) threads the bilayer. Over 216-307 (YRKPRNTAVL…PEVIEITAAV (92 aa)) the chain is Cytoplasmic.

Belongs to the SWEET sugar transporter family. As to quaternary structure, interacts with COPT1 and COPT2. Interacts with APX8. Mostly expressed in panicles and anthers. Also detected in leaves (leaf collar, leaf auricle, leaf ligule), roots, sheaths, culms and culm nodes.

It is found in the cell membrane. Mediates both low-affinity uptake and efflux of sugar across the plasma membrane. Required for pollen viability. Involved in the transport of copper, in cooperation with COPT1 and COPT2. Functionally, confers sensitivity to bacterial blight mediated by X.oryzae pv. oryzae (Xoo) in its Xa13 allelic form (e.g. cv. IR24), probably by providing the sugar required for the pathogen growth, or by reducing copper contents in xylem. However, a recessive resistance can be associated with the xa13 allele (in which the promoter is mutated leading to reduced induction upon pathogen infection, e.g. cv. IRBB13), specifically toward Xoo Philippine race 6 and Indian race PXO8. This Oryza sativa subsp. japonica (Rice) protein is Bidirectional sugar transporter SWEET11 (SWEET11).